The chain runs to 488 residues: Argininosuccinate lyase 2 (488 aa).

The protein belongs to the lyase 1 family. Argininosuccinate lyase subfamily.

It localises to the cytoplasm. The enzyme catalyses 2-(N(omega)-L-arginino)succinate = fumarate + L-arginine. The protein operates within amino-acid biosynthesis; L-arginine biosynthesis; L-arginine from L-ornithine and carbamoyl phosphate: step 3/3. This is Argininosuccinate lyase 2 from Rhizobium meliloti (strain 1021) (Ensifer meliloti).